The chain runs to 1865 residues: Transcription initiation factor TFIID subunit 1 (1865 aa).

Residues Met-1 to Gly-27 are disordered. The 409-residue stretch at Met-1–Ile-409 folds into the Protein kinase 1 domain. A Phosphoserine; by autocatalysis modification is found at Ser-131. The disordered stretch occupies residues Glu-144–Asp-199. A compositionally biased stretch (pro residues) spans Met-151 to Pro-160. A compositionally biased stretch (basic and acidic residues) spans Val-161–Asp-176. At Ser-302 the chain carries Phosphoserine; by autocatalysis. A disordered region spans residues Pro-509–Leu-530. The segment at Lys-512 to Lys-971 is histone acetyltransferase (HAT). Lys-539 carries the post-translational modification N6-acetyllysine. Residues Lys-544 and Lys-557 each participate in a glycyl lysine isopeptide (Lys-Gly) (interchain with G-Cter in SUMO2) cross-link. 2 disordered regions span residues Pro-964–Val-983 and Arg-1228–Arg-1252. Composition is skewed to basic and acidic residues over residues Gln-969–Pro-978 and Arg-1228–Lys-1244. Residues Val-1190–Met-1268 constitute a DNA-binding region (HMG box). The interval Val-1337–Ala-1624 is interaction with ASF1A and ASF1B. Positions Pro-1346–Val-1353 match the Nuclear localization signal motif. 2 consecutive Bromo domains span residues Arg-1371–Lys-1479 and Leu-1493–Tyr-1602. The Protein kinase 2 domain maps to Met-1420–Glu-1865. Residues Glu-1625–Glu-1865 are disordered. The span at Thr-1633–Pro-1642 shows a compositional bias: pro residues. A compositionally biased stretch (polar residues) spans Asp-1646–Gln-1682. A phosphoserine mark is found at Ser-1664 and Ser-1667. Composition is skewed to acidic residues over residues Glu-1683–Gly-1697 and Glu-1715–Asp-1730. A compositionally biased stretch (low complexity) spans Ser-1739 to Ser-1751. Ser-1773, Ser-1776, and Ser-1794 each carry phosphoserine. Positions Lys-1804–Ser-1814 are enriched in polar residues. Residues Val-1820–Glu-1829 are compositionally biased toward acidic residues. Position 1821 is a phosphoserine (Ser-1821). Residues Ser-1832–His-1841 show a composition bias toward polar residues.

It belongs to the TAF1 family. As to quaternary structure, component of the TFIID basal transcription factor complex, composed of TATA-box-binding protein TBP, and a number of TBP-associated factors (TAFs), including TAF1, TAF2, TAF3, TAF4, TAF5, TAF6, TAF7, TAF8, TAF9, TAF10, TAF11, TAF12 and TAF13. Interacts with TAF7; the interaction is direct. TAF1, when part of the TFIID complex, interacts with C-terminus of TP53. Part of a TFIID-containing RNA polymerase II pre-initiation complex that is composed of TBP and at least GTF2A1, GTF2A2, GTF2E1, GTF2E2, GTF2F1, GTF2H2, GTF2H3, GTF2H4, GTF2H5, GTF2B, TCEA1, ERCC2, ERCC3, TAF1, TAF2, TAF3, TAF4, TAF5, TAF6, TAF7, TAF8, TAF9, TAF10, TAF11, TAF12 and TAF13. Component of some MLL1/MLL complex, at least composed of the core components KMT2A/MLL1, ASH2L, HCFC1/HCF1, WDR5 and RBBP5, as well as the facultative components BACC1, CHD8, E2F6, HSP70, INO80C, KANSL1, LAS1L, MAX, MCRS1, MGA, KAT8/MOF, PELP1, PHF20, PRP31, RING2, RUVB1/TIP49A, RUVB2/TIP49B, SENP3, TAF1, TAF4, TAF6, TAF7, TAF9 and TEX10. RB1 interacts with the N-terminal domain of TAF1. Interacts with ASF1A and ASF1B. Interacts (via bromo domains) with acetylated lysine residues on the N-terminus of histone H1.4, H2A, H2B, H3 and H4 (in vitro). The cofactor is Mg(2+). In terms of processing, phosphorylated by casein kinase II in vitro.

Its subcellular location is the nucleus. It carries out the reaction L-seryl-[protein] + ATP = O-phospho-L-seryl-[protein] + ADP + H(+). It catalyses the reaction L-threonyl-[protein] + ATP = O-phospho-L-threonyl-[protein] + ADP + H(+). The enzyme catalyses L-lysyl-[protein] + acetyl-CoA = N(6)-acetyl-L-lysyl-[protein] + CoA + H(+). With respect to regulation, autophosphorylates on Ser residues. Inhibited by retinoblastoma tumor suppressor protein, RB1. Binding to TAF1 or CIITA inhibits the histone acetyltransferase activity. In terms of biological role, the TFIID basal transcription factor complex plays a major role in the initiation of RNA polymerase II (Pol II)-dependent transcription. TFIID recognizes and binds promoters with or without a TATA box via its subunit TBP, a TATA-box-binding protein, and promotes assembly of the pre-initiation complex (PIC). The TFIID complex consists of TBP and TBP-associated factors (TAFs), including TAF1, TAF2, TAF3, TAF4, TAF5, TAF6, TAF7, TAF8, TAF9, TAF10, TAF11, TAF12 and TAF13. TAF1 is the largest component and core scaffold of the TFIID complex, involved in nucleating complex assembly. TAF1 forms a promoter DNA binding subcomplex of TFIID, together with TAF7 and TAF2. Contains novel N- and C-terminal Ser/Thr kinase domains which can autophosphorylate or transphosphorylate other transcription factors. Phosphorylates TP53 on 'Thr-55' which leads to MDM2-mediated degradation of TP53. Phosphorylates GTF2A1 and GTF2F1 on Ser residues. Possesses DNA-binding activity. Essential for progression of the G1 phase of the cell cycle. This chain is Transcription initiation factor TFIID subunit 1, found in Mesocricetus auratus (Golden hamster).